Reading from the N-terminus, the 620-residue chain is Long-chain fatty acid transport protein 2 (620 aa).

At methionine 1–valine 4 the chain is on the lumenal side. Residues leucine 5–leucine 27 form a helical membrane-spanning segment. The Cytoplasmic segment spans residues glutamine 28–cysteine 106. Residues valine 107–leucine 127 traverse the membrane as a helical segment. Topologically, residues glycine 128 to tyrosine 267 are lumenal. Residue tyrosine 222–lysine 233 participates in AMP binding. A helical membrane pass occupies residues histidine 268–leucine 288. The Cytoplasmic portion of the chain corresponds to arginine 289–leucine 620. N6-acetyllysine is present on lysine 291. Threonine 577 is subject to Phosphothreonine.

The protein belongs to the ATP-dependent AMP-binding enzyme family. As to expression, liver and kidney (at protein level).

The protein localises to the endoplasmic reticulum membrane. The protein resides in the peroxisome membrane. It is found in the cell membrane. It localises to the microsome. It catalyses the reaction a fatty acid(in) = a fatty acid(out). It carries out the reaction (9Z)-octadecenoate(out) = (9Z)-octadecenoate(in). The catalysed reaction is a long-chain fatty acid + ATP + CoA = a long-chain fatty acyl-CoA + AMP + diphosphate. The enzyme catalyses (5Z,8Z,11Z,14Z)-eicosatetraenoate + ATP + CoA = (5Z,8Z,11Z,14Z)-eicosatetraenoyl-CoA + AMP + diphosphate. It catalyses the reaction (9Z,12Z,15Z)-octadecatrienoate + ATP + CoA = (9Z,12Z,15Z)-octadecatrienoyl-CoA + AMP + diphosphate. It carries out the reaction hexadecanoate + ATP + CoA = hexadecanoyl-CoA + AMP + diphosphate. The catalysed reaction is (9Z)-octadecenoate + ATP + CoA = (9Z)-octadecenoyl-CoA + AMP + diphosphate. The enzyme catalyses 2,6,10,14-tetramethylpentadecanoate + ATP + CoA = pristanoyl-CoA + AMP + diphosphate. It catalyses the reaction (E)-hexadec-2-enoate + ATP + CoA = (2E)-hexadecenoyl-CoA + AMP + diphosphate. It carries out the reaction 3,7,11,15-tetramethylhexadecanoate + ATP + CoA = phytanoyl-CoA + AMP + diphosphate. The catalysed reaction is a very long-chain fatty acid + ATP + CoA = a very long-chain fatty acyl-CoA + AMP + diphosphate. The enzyme catalyses tetracosanoate + ATP + CoA = tetracosanoyl-CoA + AMP + diphosphate. It catalyses the reaction (4Z,7Z,10Z,13Z,16Z,19Z)-docosahexaenoate + ATP + CoA = (4Z,7Z,10Z,13Z,16Z,19Z)-docosahexaenoyl-CoA + AMP + diphosphate. It carries out the reaction (25R)-3alpha,7alpha,12alpha-trihydroxy-5beta-cholestan-26-oate + ATP + CoA = (25R)-3alpha,7alpha,12alpha-trihydroxy-5beta-cholestan-26-oyl-CoA + AMP + diphosphate. In terms of biological role, mediates the import of long-chain fatty acids (LCFA) into the cell by facilitating their transport across cell membranes, playing an important role in hepatic fatty acid uptake. Also functions as an acyl-CoA ligase catalyzing the ATP-dependent formation of fatty acyl-CoA using LCFA and very-long-chain fatty acids (VLCFA) as substrates, which prevents fatty acid efflux from cells and might drive more fatty acid uptake. Plays a pivotal role in regulating available LCFA substrates from exogenous sources in tissues undergoing high levels of beta-oxidation or triglyceride synthesis. Can also activate branched-chain fatty acids such as phytanic acid and pristanic acid. May contribute to the synthesis of sphingosine-1-phosphate. Does not activate C24 bile acids, cholate and chenodeoxycholate. In vitro, activates 3-alpha,7-alpha,12-alpha-trihydroxy-5-beta-cholestanate (THCA), the C27 precursor of cholic acid deriving from the de novo synthesis from cholesterol. However, it is not critical for THCA activation and bile synthesis in vivo. This Rattus norvegicus (Rat) protein is Long-chain fatty acid transport protein 2 (Slc27a2).